The sequence spans 861 residues: Piwi-like protein 1 (861 aa).

Basic residues predominate over residues 1–13; that stretch reads MTGRARARARGRA. The interval 1–64 is disordered; it reads MTGRARARAR…TAGGTAKSQG (64 aa). An Omega-N-methylarginine; by PRMT5; alternate modification is found at Arg-14. Residue Arg-14 is modified to Symmetric dimethylarginine; by PRMT5; alternate. The segment covering 17–27 has biased composition (polar residues); it reads ETAQLVGSTAS. Arg-49 carries the post-translational modification Omega-N-methylarginine; by PRMT5. Arg-53 carries the omega-N-methylarginine; alternate modification. The residue at position 53 (Arg-53) is a Symmetric dimethylarginine; alternate. Positions 217-224 match the D-box motif; the sequence is RRLLKIMN. In terms of domain architecture, PAZ spans 278–391; the sequence is TVLDFMFNFY…LIPELCYLTG (114 aa). Residues 316–318 are required for binding 2'-O-methylated 3'-end of piRNAs; sequence TYR. Arg-370 carries the post-translational modification Omega-N-methylarginine; by PRMT5. The tract at residues 479 to 615 is MID region; the sequence is SKETRGAPLI…LQMNCKMGGE (137 aa). One can recognise a Piwi domain in the interval 555–847; that stretch reads IVVCLLSSNR…LAFLVGQSIH (293 aa). Residues Asp-632, Glu-670, Asp-702, and His-836 contribute to the active site.

It belongs to the argonaute family. Piwi subfamily. In terms of assembly, interacts (via Piwi domain) with DICER1, suggesting that it forms ribonucleoprotein RISC complexes; this interaction is regulated by HSP90AB1 activity. Interacts with MAEL, KIF17, PABPC1, PRMT5 and WDR77. Interacts (when methylated on arginine residues) with TDRD1, TDRKH/TDRD2, RNF17/TDRD4, TDRD6, TDRD7 and TDRD9. Interacts with CLOCK. Interacts with MOV10L1. Interacts with ANAPC10; interaction oly takes place following piRNA-binding. Interacts with RNF8; leading to sequester RNF8 in the cytoplasm. Interacts with TEX19. Requires Mg(2+) as cofactor. Arginine methylation by PRMT5 is required for the interaction with Tudor domain-containing protein (TDRD1, TDRKH/TDRD2, RNF17/TDRD4, TDRD6, TDRD7 and TDRD9) and subsequent localization to the meiotic nuage, also named P granule. In terms of processing, ubiquitinated by the anaphase promoting complex/cyclosome (APC/C) in late spermatids, leading to its degradation. Ubiquitination only takes place following piRNA-binding in adult testis. Ubiquitination and degradation in late spermatogenesis by APC/C is probably required to release RNF8 from the cytoplasm and promote histone to protamine exchange by RNF8. In terms of tissue distribution, expressed in spermatocytes and spermatids. Also detected in prostate cancer (at protein level). Detected in most fetal and adult tissues. Expressed in testes, specifically in germline cells; detected in spermatocytes and spermatids during spermatogenesis. Increased expression in testicular tumors originating from embryonic germ cells with retention of germ cells phenotype. No expression in testicular tumors of somatic origin, such as Sertoli cell and Leydig cell tumors. Overexpressed in gastric cancer cells. Isoform 3: Ubiquitously expressed, and specifically in CD34(+) hematopoietic progenitor cells but not in more differentiated cells.

It is found in the cytoplasm. Its function is as follows. Endoribonuclease that plays a central role in postnatal germ cells by repressing transposable elements and preventing their mobilization, which is essential for the germline integrity. Acts via the piRNA metabolic process, which mediates the repression of transposable elements during meiosis by forming complexes composed of piRNAs and Piwi proteins and governs the methylation and subsequent repression of transposons. Directly binds methylated piRNAs, a class of 24 to 30 nucleotide RNAs that are generated by a Dicer-independent mechanism and are primarily derived from transposons and other repeated sequence elements. Strongly prefers a uridine in the first position of their guide (g1U preference, also named 1U-bias). Not involved in the piRNA amplification loop, also named ping-pong amplification cycle. Acts as an endoribonuclease that cleaves transposon messenger RNAs. Besides their function in transposable elements repression, piRNAs are probably involved in other processes during meiosis such as translation regulation. Probable component of some RISC complex, which mediates RNA cleavage and translational silencing. Also plays a role in the formation of chromatoid bodies and is required for some miRNAs stability. Required to sequester RNF8 in the cytoplasm until late spermatogenesis; RNF8 being released upon ubiquitination and degradation of PIWIL1. May be a negative developmental regulator. In Homo sapiens (Human), this protein is Piwi-like protein 1 (PIWIL1).